Reading from the N-terminus, the 117-residue chain is Gamma-aminobutyric acid receptor-associated protein-like 2 (117 aa).

An N6-acetyllysine modification is found at Lys-24. Phosphoserine occurs at positions 39, 87, and 88. Gly-116 carries the Phosphatidylethanolamine amidated glycine; alternate lipid modification. Gly-116 is lipidated: Phosphatidylserine amidated glycine; alternate. Residue Phe-117 is a propeptide, removed in mature form.

It belongs to the ATG8 family. Monomer. Interacts with ATG3, ATG7, ATG13 and ULK1. Interacts with TP53INP1 and TP53INP2. Interacts with TBC1D25. Directly interacts with SQSTM1 and BNIP3. Interacts with TECPR2 and PCM1. Interacts with TBC1D5. Interacts with TRIM5. Interacts with MEFV and TRIM21. Interacts with WDFY3. Interacts with UBA5; promoting recruitment of UBA5 to the endoplasmic reticulum membrane. Interacts with GOSR1. Interacts with KBTBD6 and KBTBD7; the interaction is direct. Interacts with reticulophagy regulators RETREG1, RETREG2 and RETREG3. Interacts with IRGM. Interacts with DNM2. Interacts with NCOA4. Interacts with IRGQ. In terms of processing, the precursor molecule is cleaved by ATG4 (ATG4A, ATG4B, ATG4C or ATG4D) to expose the glycine at the C-terminus and form the cytosolic form, GABARAPL2-I. The processed form is then activated by APG7L/ATG7, transferred to ATG3 and conjugated to phosphatidylethanolamine (PE) phospholipid to form the membrane-bound form, GABARAPL2-II. During non-canonical autophagy, the processed form is conjugated to phosphatidylserine (PS) phospholipid. ATG4 proteins also mediate the delipidation of PE-conjugated forms required for GABARAPL2 recycling when autophagosomes fuse with lysosomes. In addition, ATG4B and ATG4D mediate delipidation of ATG8 proteins conjugated to PS during non-canonical autophagy. ATG4B constitutes the major protein for proteolytic activation. ATG4D is the main enzyme for delipidation activity. Post-translationally, phosphorylation at Ser-87 and Ser-88 by TBK1 prevents interaction with ATG4 (ATG4A, ATG4B, ATG4C or ATG4D). Phosphorylation by TBK1 on autophagosomes prevents their delipidation by ATG4 and premature removal from nascent autophagosomes. Ubiquitous. Expressed at high levels in the brain, heart, prostate, ovary, spleen and skeletal muscle. Expressed at very low levels in lung, thymus and small intestine.

The protein resides in the cytoplasmic vesicle. It localises to the autophagosome. Its subcellular location is the endoplasmic reticulum membrane. The protein localises to the golgi apparatus. Its function is as follows. Ubiquitin-like modifier involved in intra-Golgi traffic. Modulates intra-Golgi transport through coupling between NSF activity and SNAREs activation. It first stimulates the ATPase activity of NSF which in turn stimulates the association with GOSR1. Involved in autophagy. Plays a role in mitophagy which contributes to regulate mitochondrial quantity and quality by eliminating the mitochondria to a basal level to fulfill cellular energy requirements and preventing excess ROS production. Whereas LC3s are involved in elongation of the phagophore membrane, the GABARAP/GATE-16 subfamily is essential for a later stage in autophagosome maturation. The sequence is that of Gamma-aminobutyric acid receptor-associated protein-like 2 from Bos taurus (Bovine).